The following is a 588-amino-acid chain: L-fucose isomerase (588 aa).

Residues glutamate 335 and aspartate 359 each act as proton acceptor in the active site. Mn(2+) contacts are provided by glutamate 335, aspartate 359, and histidine 525.

Belongs to the L-fucose isomerase family. The cofactor is Mn(2+).

Its subcellular location is the cytoplasm. It carries out the reaction L-fucose = L-fuculose. It participates in carbohydrate degradation; L-fucose degradation; L-lactaldehyde and glycerone phosphate from L-fucose: step 1/3. Converts the aldose L-fucose into the corresponding ketose L-fuculose. The sequence is that of L-fucose isomerase from Streptococcus pneumoniae (strain ATCC 700669 / Spain 23F-1).